The chain runs to 677 residues: Amine oxidase [copper-containing] alpha 2, peroxisomal (677 aa).

Tyrosine 320–threonine 331 contacts substrate. The active-site Proton acceptor is the aspartate 322. An intrachain disulfide couples cysteine 341 to cysteine 367. Residue valine 407 to tyrosine 412 coordinates substrate. Tyrosine 410 serves as the catalytic Schiff-base intermediate with substrate; via topaquinone. Tyrosine 410 bears the 2',4',5'-topaquinone mark. Residues histidine 466 and histidine 468 each contribute to the Cu cation site. Aspartate 477, aspartate 617, and isoleucine 618 together coordinate Mn(2+). Residue histidine 628 coordinates Cu cation.

It belongs to the copper/topaquinone oxidase family. As to quaternary structure, homodimer. Cu cation is required as a cofactor. Zn(2+) serves as cofactor. Requires L-topaquinone as cofactor. In terms of processing, topaquinone (TPQ) is generated by copper-dependent autoxidation of a specific tyrosyl residue. Expressed exclusively in leaves.

It localises to the peroxisome. It catalyses the reaction a primary methyl amine + O2 + H2O = an aldehyde + H2O2 + NH4(+). It functions in the pathway amine and polyamine degradation; putrescine degradation. In terms of biological role, copper amine oxidase that can use putrescine and spermidine as substrates. Involved in putrescine catabolism in peroxisomes in response to salt stress. Regulates arginine-dependent nitric oxide (NO) production, a key signaling molecule regulating a wide range of physiological processes including responses to salt stress, by influencing arginine bioavailability. Modulates primary root growth. The protein is Amine oxidase [copper-containing] alpha 2, peroxisomal of Arabidopsis thaliana (Mouse-ear cress).